The following is a 191-amino-acid chain: Fe/S biogenesis protein NfuA (191 aa).

[4Fe-4S] cluster contacts are provided by cysteine 149 and cysteine 152.

It belongs to the NfuA family. Homodimer. [4Fe-4S] cluster serves as cofactor.

In terms of biological role, involved in iron-sulfur cluster biogenesis. Binds a 4Fe-4S cluster, can transfer this cluster to apoproteins, and thereby intervenes in the maturation of Fe/S proteins. Could also act as a scaffold/chaperone for damaged Fe/S proteins. This chain is Fe/S biogenesis protein NfuA, found in Enterobacter sp. (strain 638).